Consider the following 442-residue polypeptide: Histidine--tRNA ligase (442 aa).

It belongs to the class-II aminoacyl-tRNA synthetase family. Homodimer.

It localises to the cytoplasm. It catalyses the reaction tRNA(His) + L-histidine + ATP = L-histidyl-tRNA(His) + AMP + diphosphate + H(+). In Helicobacter pylori (strain P12), this protein is Histidine--tRNA ligase.